A 427-amino-acid chain; its full sequence is MGYEKSIEAMKIAENLMPGGVNSPVRAFKSVDTPAIFMDHAKGSRIYDIDGNEYIDYVLSWGPLILGHKNEQVIKKLHEAVNRGTSFGASTLEENKLAELVIERVPSIEKVRMVSSGTEATLAALRLARGYTGRNKIIKFEGCYHGHSDSLLIKAGSGVATLGLPDSPGVPEGTAKNTITVPYNDLEAIKIAFENYGDDIAGIIVEPVAGNMGVVPPKDGFLQGLREITNDYGALLIFDEVMTGFRVGYNCAQGYFGVTPDLTCLGKVIGGGLPVGAFGGRKEIMDKVAPVGNIYQAGTLSGNPLAMTSGYETLSQLTPESYEYFQELGDILEEGLKKVFSKHNVPITINRAGSMIGYFLNEGPVTNFEEANKSNLELFSQMYREMAKEGVFLPPSQFEGTFLSTAHSKEDIEKTIQAFDTALSRIV.

N6-(pyridoxal phosphate)lysine is present on lysine 267.

The protein belongs to the class-III pyridoxal-phosphate-dependent aminotransferase family. HemL subfamily. Homodimer. It depends on pyridoxal 5'-phosphate as a cofactor.

It localises to the cytoplasm. It catalyses the reaction (S)-4-amino-5-oxopentanoate = 5-aminolevulinate. The protein operates within porphyrin-containing compound metabolism; protoporphyrin-IX biosynthesis; 5-aminolevulinate from L-glutamyl-tRNA(Glu): step 2/2. The sequence is that of Glutamate-1-semialdehyde 2,1-aminomutase 2 from Staphylococcus haemolyticus (strain JCSC1435).